A 479-amino-acid chain; its full sequence is Cardiolipin synthase A (479 aa).

2 helical membrane-spanning segments follow: residues 8 to 28 (FFGY…LHAV) and 38 to 58 (IAWA…YLVF). PLD phosphodiesterase domains lie at 218-245 (VNFR…GDEY) and 392-419 (QPGF…DNRS). Catalysis depends on residues H223, K225, D230, H397, K399, and D404.

Belongs to the phospholipase D family. Cardiolipin synthase subfamily. ClsA sub-subfamily.

The protein localises to the cell inner membrane. It carries out the reaction 2 a 1,2-diacyl-sn-glycero-3-phospho-(1'-sn-glycerol) = a cardiolipin + glycerol. Catalyzes the reversible phosphatidyl group transfer from one phosphatidylglycerol molecule to another to form cardiolipin (CL) (diphosphatidylglycerol) and glycerol. The protein is Cardiolipin synthase A of Pseudomonas putida (strain W619).